The primary structure comprises 318 residues: tRNA uridine(34) hydroxylase (318 aa).

Residues 125–219 (QDPNTVVIDA…YGTSKDTEGK (95 aa)) enclose the Rhodanese domain. Cys-179 functions as the Cysteine persulfide intermediate in the catalytic mechanism.

It belongs to the TrhO family.

The enzyme catalyses uridine(34) in tRNA + AH2 + O2 = 5-hydroxyuridine(34) in tRNA + A + H2O. Its function is as follows. Catalyzes oxygen-dependent 5-hydroxyuridine (ho5U) modification at position 34 in tRNAs. This is tRNA uridine(34) hydroxylase from Acholeplasma laidlawii (strain PG-8A).